A 578-amino-acid polypeptide reads, in one-letter code: Palmitoyltransferase ZDHHC1 (578 aa).

Residues 1–41 (MDVCSKNSNRTAPVSEGGIRRADVPLCSRTNGWSWPPHPFQ) are Cytoplasmic-facing. A helical transmembrane segment spans residues 42-62 (FLAWLLYLYFAVTGFGVFVPL). The Lumenal segment spans residues 63–71 (LPTHWIPAG). Residues 72-92 (YICTGITFVCHLFMHLMAVSI) form a helical membrane-spanning segment. Residues 93–174 (DPADYNVRAK…YWLFLNSVIS (82 aa)) lie on the Cytoplasmic side of the membrane. The region spanning 121 to 173 (ENCHCYLCEVDVGPKSKHCSACNKCVASFDHHCRWLNNCVGSRNYWLFLNSVI) is the DHHC domain. Cysteine 153 (S-palmitoyl cysteine intermediate) is an active-site residue. The chain crosses the membrane as a helical span at residues 175–195 (ALLGIVLVVVIASYVFIEFFL). At 196–230 (DPSKLRSDKHFQQVRNESVVWFVFLPVAPVTTAGP) the chain is on the lumenal side. Residues 231 to 251 (AIPALAGVTIALGLLSALLLG) form a helical membrane-spanning segment. The Cytoplasmic segment spans residues 252–578 (HLLCFHIYLM…PSSRVGTSLA (327 aa)). A compositionally biased stretch (basic and acidic residues) spans 278-288 (QEAGDSRKPPP). 4 disordered regions span residues 278-298 (QEAG…PKLN), 345-376 (HMDE…KRKV), 497-517 (SAAG…TAAR), and 532-578 (SMFM…TSLA). Residues 363 to 376 (PHPHKHAQKKKRKV) show a composition bias toward basic residues. A compositionally biased stretch (basic residues) spans 552-561 (AAKRKQTGKK).

Belongs to the DHHC palmitoyltransferase family.

It is found in the endosome membrane. It localises to the endoplasmic reticulum membrane. The protein localises to the golgi apparatus. The enzyme catalyses L-cysteinyl-[protein] + hexadecanoyl-CoA = S-hexadecanoyl-L-cysteinyl-[protein] + CoA. Palmitoyltransferase that catalyzes the addition of palmitate onto various protein substrates, such as ncdn and nlrp3. The protein is Palmitoyltransferase ZDHHC1 of Danio rerio (Zebrafish).